Here is a 180-residue protein sequence, read N- to C-terminus: Peptide deformylase (180 aa).

2 residues coordinate Fe cation: Cys88 and His130. Glu131 is an active-site residue. His134 provides a ligand contact to Fe cation.

This sequence belongs to the polypeptide deformylase family. Fe(2+) serves as cofactor.

The catalysed reaction is N-terminal N-formyl-L-methionyl-[peptide] + H2O = N-terminal L-methionyl-[peptide] + formate. Functionally, removes the formyl group from the N-terminal Met of newly synthesized proteins. Requires at least a dipeptide for an efficient rate of reaction. N-terminal L-methionine is a prerequisite for activity but the enzyme has broad specificity at other positions. The sequence is that of Peptide deformylase from Acidothermus cellulolyticus (strain ATCC 43068 / DSM 8971 / 11B).